Consider the following 225-residue polypeptide: MSSHTPVVTVDGPSGAGKGTLCMLLAKKLGFQLLDSGAIYRVLALAALHHGVDLESEDALVPLATHLDVQFIAEGDLVKVILEGEDVSRELRKEETGMAASKVAALPRVREALLRRQRAFASGIGLVADGRDMGTVVFPAAEAKIFLDASAEERARRRFKQLQLKGLDVKFDALLSEIQERDDRDRNRAVAPLRPAEDALVLDSTTLTIDEVVEQALQYIESKLV.

12 to 20 (GPSGAGKGT) is a binding site for ATP.

The protein belongs to the cytidylate kinase family. Type 1 subfamily.

The protein resides in the cytoplasm. The catalysed reaction is CMP + ATP = CDP + ADP. It catalyses the reaction dCMP + ATP = dCDP + ADP. The polypeptide is Cytidylate kinase (Vibrio cholerae serotype O1 (strain ATCC 39315 / El Tor Inaba N16961)).